The following is a 219-amino-acid chain: Glutathione S-transferase 3 (219 aa).

A GST N-terminal domain is found at 3–82 (DEVVLLDTWA…YIDEVWNDKS (80 aa)). Glutathione is bound by residues S13, I54, and 66-67 (ES). Residues 88–216 (DPYKRSQARF…GLIVELQKTL (129 aa)) form the GST C-terminal domain.

This sequence belongs to the GST superfamily. HSP26 family. In terms of assembly, homodimer. degradation; (R)-lactate from methylglyoxal: step 1/2.

The enzyme catalyses RX + glutathione = an S-substituted glutathione + a halide anion + H(+). Functionally, conjugation of reduced glutathione to a wide number of exogenous and endogenous hydrophobic electrophiles. Involved in the detoxification of certain herbicides. This chain is Glutathione S-transferase 3 (GST3), found in Glycine max (Soybean).